We begin with the raw amino-acid sequence, 375 residues long: Succinyl-diaminopimelate desuccinylase (375 aa).

Residue His66 coordinates Zn(2+). Asp68 is a catalytic residue. Asp99 is a Zn(2+) binding site. Glu133 acts as the Proton acceptor in catalysis. Zn(2+) contacts are provided by Glu134, Glu162, and His348.

Belongs to the peptidase M20A family. DapE subfamily. As to quaternary structure, homodimer. Zn(2+) is required as a cofactor. Requires Co(2+) as cofactor.

It catalyses the reaction N-succinyl-(2S,6S)-2,6-diaminopimelate + H2O = (2S,6S)-2,6-diaminopimelate + succinate. It functions in the pathway amino-acid biosynthesis; L-lysine biosynthesis via DAP pathway; LL-2,6-diaminopimelate from (S)-tetrahydrodipicolinate (succinylase route): step 3/3. In terms of biological role, catalyzes the hydrolysis of N-succinyl-L,L-diaminopimelic acid (SDAP), forming succinate and LL-2,6-diaminopimelate (DAP), an intermediate involved in the bacterial biosynthesis of lysine and meso-diaminopimelic acid, an essential component of bacterial cell walls. The polypeptide is Succinyl-diaminopimelate desuccinylase (Salmonella typhi).